Reading from the N-terminus, the 134-residue chain is Phospholipase A2 (134 aa).

Positions 8, 10, and 12 each coordinate Ca(2+). 5 disulfides stabilise this stretch: Cys-9–Cys-31, Cys-30–Cys-70, Cys-37–Cys-63, Cys-61–Cys-95, and Cys-105–Cys-113. An N-linked (GlcNAc...) asparagine glycan is attached at Asn-13. The active site involves His-34. Residue Asp-35 participates in Ca(2+) binding. The active site involves Asp-64.

The protein belongs to the phospholipase A2 family. Group III subfamily. Ca(2+) serves as cofactor. As to expression, expressed by the venom gland.

It is found in the secreted. The enzyme catalyses a 1,2-diacyl-sn-glycero-3-phosphocholine + H2O = a 1-acyl-sn-glycero-3-phosphocholine + a fatty acid + H(+). Functionally, PLA2 catalyzes the calcium-dependent hydrolysis of the 2-acyl groups in 3-sn-phosphoglycerides. This Apis cerana cerana (Oriental honeybee) protein is Phospholipase A2.